Consider the following 341-residue polypeptide: Hyaluronidase A (341 aa).

Residues asparagine 3, asparagine 68, and asparagine 83 are each glycosylated (N-linked (GlcNAc...) asparagine). 2 disulfides stabilise this stretch: cysteine 23–cysteine 311 and cysteine 189–cysteine 201.

It belongs to the glycosyl hydrolase 56 family. Expressed by the venom gland.

The protein localises to the secreted. The catalysed reaction is Random hydrolysis of (1-&gt;4)-linkages between N-acetyl-beta-D-glucosamine and D-glucuronate residues in hyaluronate.. May hydrolyze high molecular weight hyaluronic acid to produce small oligosaccharides. The chain is Hyaluronidase A from Vespa velutina (Asian yellow-legged hornet).